The chain runs to 122 residues: Large ribosomal subunit protein uL14 (122 aa).

This sequence belongs to the universal ribosomal protein uL14 family. In terms of assembly, part of the 50S ribosomal subunit. Forms a cluster with proteins L3 and L19. In the 70S ribosome, L14 and L19 interact and together make contacts with the 16S rRNA in bridges B5 and B8.

Binds to 23S rRNA. Forms part of two intersubunit bridges in the 70S ribosome. In Chlamydia muridarum (strain MoPn / Nigg), this protein is Large ribosomal subunit protein uL14.